The sequence spans 532 residues: 2-isopropylmalate synthase (532 aa).

In terms of domain architecture, Pyruvate carboxyltransferase spans 5–267 (VIIFDTTLRD…HTNINHQEIY (263 aa)). Mn(2+) contacts are provided by Asp-14, His-202, His-204, and Asn-238. The interval 392–532 (HLDYFSVQSG…SKQQNSQETV (141 aa)) is regulatory domain. Residues 513–532 (QQHNNQQQNDSKQQNSQETV) are disordered.

Belongs to the alpha-IPM synthase/homocitrate synthase family. LeuA type 1 subfamily. In terms of assembly, homodimer. Requires Mn(2+) as cofactor.

It is found in the cytoplasm. It catalyses the reaction 3-methyl-2-oxobutanoate + acetyl-CoA + H2O = (2S)-2-isopropylmalate + CoA + H(+). Its pathway is amino-acid biosynthesis; L-leucine biosynthesis; L-leucine from 3-methyl-2-oxobutanoate: step 1/4. Catalyzes the condensation of the acetyl group of acetyl-CoA with 3-methyl-2-oxobutanoate (2-ketoisovalerate) to form 3-carboxy-3-hydroxy-4-methylpentanoate (2-isopropylmalate). The polypeptide is 2-isopropylmalate synthase (Pectobacterium atrosepticum (strain SCRI 1043 / ATCC BAA-672) (Erwinia carotovora subsp. atroseptica)).